Reading from the N-terminus, the 302-residue chain is Probable alpha-L-glutamate ligase (302 aa).

The 184-residue stretch at 104–287 (MQLLSREGVG…VAGMIIEFIE (184 aa)) folds into the ATP-grasp domain. ATP contacts are provided by residues Lys-141, 178 to 179 (EF), Asp-187, and 211 to 213 (RSN). Mg(2+) contacts are provided by Asp-248, Glu-260, and Asn-262. Residues Asp-248, Glu-260, and Asn-262 each contribute to the Mn(2+) site.

It belongs to the RimK family. Mg(2+) serves as cofactor. The cofactor is Mn(2+).

The sequence is that of Probable alpha-L-glutamate ligase from Halorhodospira halophila (strain DSM 244 / SL1) (Ectothiorhodospira halophila (strain DSM 244 / SL1)).